The sequence spans 392 residues: Lipid-A-disaccharide synthase (392 aa).

The protein belongs to the LpxB family.

The catalysed reaction is a lipid X + a UDP-2-N,3-O-bis[(3R)-3-hydroxyacyl]-alpha-D-glucosamine = a lipid A disaccharide + UDP + H(+). The protein operates within bacterial outer membrane biogenesis; LPS lipid A biosynthesis. In terms of biological role, condensation of UDP-2,3-diacylglucosamine and 2,3-diacylglucosamine-1-phosphate to form lipid A disaccharide, a precursor of lipid A, a phosphorylated glycolipid that anchors the lipopolysaccharide to the outer membrane of the cell. This Syntrophotalea carbinolica (strain DSM 2380 / NBRC 103641 / GraBd1) (Pelobacter carbinolicus) protein is Lipid-A-disaccharide synthase.